The primary structure comprises 148 residues: D-aminoacyl-tRNA deacylase (148 aa).

Positions 137 to 138 (GP) match the Gly-cisPro motif, important for rejection of L-amino acids motif.

This sequence belongs to the DTD family. In terms of assembly, homodimer.

The protein resides in the cytoplasm. The catalysed reaction is glycyl-tRNA(Ala) + H2O = tRNA(Ala) + glycine + H(+). The enzyme catalyses a D-aminoacyl-tRNA + H2O = a tRNA + a D-alpha-amino acid + H(+). Its function is as follows. An aminoacyl-tRNA editing enzyme that deacylates mischarged D-aminoacyl-tRNAs. Also deacylates mischarged glycyl-tRNA(Ala), protecting cells against glycine mischarging by AlaRS. Acts via tRNA-based rather than protein-based catalysis; rejects L-amino acids rather than detecting D-amino acids in the active site. By recycling D-aminoacyl-tRNA to D-amino acids and free tRNA molecules, this enzyme counteracts the toxicity associated with the formation of D-aminoacyl-tRNA entities in vivo and helps enforce protein L-homochirality. The protein is D-aminoacyl-tRNA deacylase of Latilactobacillus sakei subsp. sakei (strain 23K) (Lactobacillus sakei subsp. sakei).